A 455-amino-acid polypeptide reads, in one-letter code: Golgi pH regulator (455 aa).

2 consecutive transmembrane segments (helical) span residues 5-25 (IDSS…WLFF) and 46-66 (VTFA…LGVL). N-linked (GlcNAc...) asparagine glycosylation is present at Asn67. The next 3 membrane-spanning stretches (helical) occupy residues 79 to 99 (LCVI…YFVV), 111 to 131 (LFAC…GDPF), and 150 to 170 (VGVI…VNCP). N-linked (GlcNAc...) asparagine glycans are attached at residues Asn180 and Asn243. Transmembrane regions (helical) follow at residues 290–310 (GYFF…NIVF), 343–363 (ISFI…LITL), 378–398 (VIVL…VLLI), and 425–445 (WFDV…YLAH).

It belongs to the Golgi pH regulator (TC 1.A.38) family. Homotrimer.

It localises to the golgi apparatus membrane. It carries out the reaction iodide(out) = iodide(in). The catalysed reaction is chloride(in) = chloride(out). It catalyses the reaction bromide(in) = bromide(out). The enzyme catalyses fluoride(in) = fluoride(out). Voltage-gated channel that enables the transfer of anions such as iodide, chloride, bromide and fluoride which may function in counter-ion conductance and participates in Golgi acidification. This is Golgi pH regulator from Gallus gallus (Chicken).